We begin with the raw amino-acid sequence, 119 residues long: Large ribosomal subunit protein P3z (119 aa).

Residues alanine 79–glycine 90 show a composition bias toward gly residues. The tract at residues alanine 79–glycine 119 is disordered. Residues proline 96–glutamate 105 are compositionally biased toward basic and acidic residues.

Belongs to the eukaryotic ribosomal protein P1/P2 family. Phosphorylated.

In terms of biological role, plays an important role in the elongation step of protein synthesis. The protein is Large ribosomal subunit protein P3z (RPP3A) of Arabidopsis thaliana (Mouse-ear cress).